A 333-amino-acid chain; its full sequence is Fructose-1,6-bisphosphatase class 1 (333 aa).

Mg(2+) is bound by residues glutamate 92, aspartate 113, leucine 115, and aspartate 116. Residues 116-119 (DGSS), asparagine 209, tyrosine 242, and lysine 272 each bind substrate. Residue glutamate 278 participates in Mg(2+) binding.

It belongs to the FBPase class 1 family. In terms of assembly, homotetramer. Requires Mg(2+) as cofactor.

It is found in the cytoplasm. It carries out the reaction beta-D-fructose 1,6-bisphosphate + H2O = beta-D-fructose 6-phosphate + phosphate. Its pathway is carbohydrate biosynthesis; Calvin cycle. This Chlorobium phaeovibrioides (strain DSM 265 / 1930) (Prosthecochloris vibrioformis (strain DSM 265)) protein is Fructose-1,6-bisphosphatase class 1.